We begin with the raw amino-acid sequence, 354 residues long: C-C chemokine receptor type 5 (354 aa).

Residues 1–32 (MDFQGSIPTYIYDIDYSMSAPCQKVNVKQIAA) lie on the Extracellular side of the membrane. O-linked (GalNAc...) serine glycosylation occurs at Ser-6. Tyr-10 and Tyr-16 each carry sulfotyrosine. 2 disulfides stabilise this stretch: Cys-22/Cys-271 and Cys-103/Cys-180. A helical transmembrane segment spans residues 33–60 (QLLPPLYSLVFIFGFVGNMMVFLILISC). The Cytoplasmic portion of the chain corresponds to 61-70 (KKLKSMTDIY). The helical transmembrane segment at 71-91 (LFNLAISDLLFLLTLPFWAHY) threads the bilayer. Residues 92–104 (AANEWVFGNIMCK) lie on the Extracellular side of the membrane. Residues 105-126 (LFTGIYHIGYFGGIFFIILLTI) traverse the membrane as a helical segment. The Cytoplasmic portion of the chain corresponds to 127–143 (DRYLAIVHAVFAIKART). The helical transmembrane segment at 144–168 (VNFGVITSVVTWVVAVFVSLPEIIF) threads the bilayer. Residues 169–200 (MRSQKEGSHYTCSPHFLHIQYRFWKHFQTLKM) are Extracellular-facing. The chain crosses the membrane as a helical span at residues 201–220 (VILSLILPLLVMVICYSGIL). The Cytoplasmic segment spans residues 221-237 (NTLFRCRNEKKRHRAVR). The helical transmembrane segment at 238 to 262 (LIFAIMIVYFLFWTPYNIVLLLTTF) threads the bilayer. Residues 263 to 279 (QEYFGLNNCSSSNRLDQ) lie on the Extracellular side of the membrane. The helical transmembrane segment at 280–303 (AMQVTETLGMTHCCLNPVIYAFVG) threads the bilayer. Topologically, residues 304 to 354 (EKFRNYLSVFFRKHIVKRFCKHCSIFQQVNPDRVSSVYTRSTGEQEVSTGL) are cytoplasmic. Residues Cys-323 and Cys-326 are each lipidated (S-palmitoyl cysteine). A phosphoserine; by BARK1 mark is found at Ser-338, Ser-339, Ser-344, and Ser-351.

It belongs to the G-protein coupled receptor 1 family. As to quaternary structure, interacts with PRAF2. Efficient ligand binding to CCL3/MIP-1alpha and CCL4/MIP-1beta requires sulfation, O-glycosylation and sialic acid modifications. Glycosylation on Ser-6 is required for efficient binding of CCL4. Interacts with GRK2. Interacts with ARRB1 and ARRB2. Interacts with CNIH4. Interacts with S100A4; this interaction stimulates T-lymphocyte chemotaxis. Sulfated on at least 2 of the N-terminal tyrosines. Sulfation is required for efficient binding of the chemokines, CCL3 and CCL4. Post-translationally, O-glycosylated, but not N-glycosylated. Ser-6 appears to be the major site. Also sialylated glycans present which contribute to chemokine binding. Ser-17 may also be glycosylated and, if so, with small moieties such as a T-antigen. In terms of processing, palmitoylation in the C-terminal is important for cell surface expression. Phosphorylation on serine residues in the C-terminal is stimulated by binding CC chemokines especially by APO-RANTES.

It is found in the cell membrane. In terms of biological role, receptor for a number of inflammatory CC-chemokines including CCL3/MIP-1-alpha, CCL4/MIP-1-beta and RANTES and subsequently transduces a signal by increasing the intracellular calcium ion level. May play a role in the control of granulocytic lineage proliferation or differentiation. Participates in T-lymphocyte migration to the infection site by acting as a chemotactic receptor. This Rattus norvegicus (Rat) protein is C-C chemokine receptor type 5 (Ccr5).